The sequence spans 344 residues: Endo-1,4-beta-xylanase UM03411 (344 aa).

Residues 1–21 (MKTNFLVLLSALLAASSAVTA) form the signal peptide. Residues 35 to 338 (QRAGSSLNAA…KPAYNAVLST (304 aa)) enclose the GH10 domain. The Proton donor role is filled by Glu166. N-linked (GlcNAc...) asparagine glycosylation occurs at Asn171. Glu275 (nucleophile) is an active-site residue. Cys293 and Cys299 form a disulfide bridge. N-linked (GlcNAc...) asparagine glycans are attached at residues Asn310 and Asn323.

This sequence belongs to the glycosyl hydrolase 10 (cellulase F) family.

The protein resides in the secreted. It catalyses the reaction Endohydrolysis of (1-&gt;4)-beta-D-xylosidic linkages in xylans.. The protein operates within glycan degradation; xylan degradation. Endo-1,4-beta-xylanase involved in the hydrolysis of xylan, a major structural heterogeneous polysaccharide found in plant biomass representing the second most abundant polysaccharide in the biosphere, after cellulose. The protein is Endo-1,4-beta-xylanase UM03411 of Mycosarcoma maydis (Corn smut fungus).